The chain runs to 219 residues: Dephospho-CoA kinase (219 aa).

The 208-residue stretch at 8–215 (LVGVTGGIGS…EAAASGPDCQ (208 aa)) folds into the DPCK domain. 16-21 (GSGKST) lines the ATP pocket.

It belongs to the CoaE family.

It is found in the cytoplasm. It catalyses the reaction 3'-dephospho-CoA + ATP = ADP + CoA + H(+). It participates in cofactor biosynthesis; coenzyme A biosynthesis; CoA from (R)-pantothenate: step 5/5. In terms of biological role, catalyzes the phosphorylation of the 3'-hydroxyl group of dephosphocoenzyme A to form coenzyme A. The protein is Dephospho-CoA kinase of Chlorobium luteolum (strain DSM 273 / BCRC 81028 / 2530) (Pelodictyon luteolum).